We begin with the raw amino-acid sequence, 336 residues long: Ketol-acid reductoisomerase (NADP(+)) (336 aa).

Positions 3–183 (ATMYYDRDVS…GGTRAGVLET (181 aa)) constitute a KARI N-terminal Rossmann domain. NADP(+) is bound by residues 26–29 (YGSQ), Arg-49, Ser-52, Ser-54, and 84–87 (DETQ). His-109 is a catalytic residue. Gly-135 contacts NADP(+). In terms of domain architecture, KARI C-terminal knotted spans 184 to 329 (TFKEETETDL…RELRSKMPFI (146 aa)). Mg(2+) contacts are provided by Asp-192, Glu-196, Glu-228, and Glu-232. Position 253 (Ser-253) interacts with substrate.

The protein belongs to the ketol-acid reductoisomerase family. Mg(2+) is required as a cofactor.

It catalyses the reaction (2R)-2,3-dihydroxy-3-methylbutanoate + NADP(+) = (2S)-2-acetolactate + NADPH + H(+). It carries out the reaction (2R,3R)-2,3-dihydroxy-3-methylpentanoate + NADP(+) = (S)-2-ethyl-2-hydroxy-3-oxobutanoate + NADPH + H(+). The protein operates within amino-acid biosynthesis; L-isoleucine biosynthesis; L-isoleucine from 2-oxobutanoate: step 2/4. It functions in the pathway amino-acid biosynthesis; L-valine biosynthesis; L-valine from pyruvate: step 2/4. Its function is as follows. Involved in the biosynthesis of branched-chain amino acids (BCAA). Catalyzes an alkyl-migration followed by a ketol-acid reduction of (S)-2-acetolactate (S2AL) to yield (R)-2,3-dihydroxy-isovalerate. In the isomerase reaction, S2AL is rearranged via a Mg-dependent methyl migration to produce 3-hydroxy-3-methyl-2-ketobutyrate (HMKB). In the reductase reaction, this 2-ketoacid undergoes a metal-dependent reduction by NADPH to yield (R)-2,3-dihydroxy-isovalerate. The protein is Ketol-acid reductoisomerase (NADP(+)) of Deinococcus geothermalis (strain DSM 11300 / CIP 105573 / AG-3a).